The chain runs to 243 residues: Vesicle-associated membrane protein-associated protein B/C (243 aa).

An N-acetylalanine modification is found at Ala-2. At 2 to 222 (AKVEQVLSLE…PTGKEEGLST (221 aa)) the chain is on the cytoplasmic side. Residues 7–124 (VLSLEPQHEL…MDSKLRCVFE (118 aa)) enclose the MSP domain. Ser-146 is modified (phosphoserine). Residue Lys-147 forms a Glycyl lysine isopeptide (Lys-Gly) (interchain with G-Cter in SUMO1) linkage. At Thr-150 the chain carries Phosphothreonine. A phosphoserine mark is found at Ser-156, Ser-158, Ser-159, Ser-160, and Ser-206. Residues 159-196 (SSLDDTEVKKVMEECKRLQGEVQRLREENKQFKEEDGL) adopt a coiled-coil conformation. Residues 223-243 (RLLALVVLFFIVGVIIGKIAL) form a helical; Anchor for type IV membrane protein membrane-spanning segment.

Belongs to the VAMP-associated protein (VAP) (TC 9.B.17) family. Homodimer, and heterodimer with VAPA. Interacts with VAMP1 and VAMP2. Interacts (via MSP domain) with ZFYVE27. Interacts with RMDN3. Interacts with KIF5A in a ZFYVE27-dependent manner. Interacts (via MSP domain) with STARD3 (via phospho-FFAT motif). Interacts with STARD3NL (via FFAT motif). Interacts with CERT1. Interacts with PLEKHA3 and SACM1L to form a ternary complex. Interacts with VPS13A (via FFAT motif). Interacts with RB1CC1 (via phosphorylated FFAT motif), MIGA2 (via phosphorylated FFAT motif), RMDN3 (via phosphorylated FFAT motif), OSBPL1A (via FFAT motif), KCNB1 (via phosphorylated FFAT motif) and KCNB2 (via phosphorylated FFAT motif). Interacts (via MSP domain) with WDR44 (via FFAT motif); the interactions connect the endoplasmic reticulum (ER) with the endosomal tubule. As to quaternary structure, (Microbial infection) Interacts (via MSP domain) with hepatitis C virus (HCV) non-structural protein 5A (via disordered domain D3). Interacts with HCV RNA-directed RNA polymerase. In terms of tissue distribution, ubiquitous. Isoform 1 predominates.

It is found in the endoplasmic reticulum membrane. Endoplasmic reticulum (ER)-anchored protein that mediates the formation of contact sites between the ER and endosomes via interaction with FFAT motif-containing proteins such as STARD3 or WDR44. Interacts with STARD3 in a FFAT motif phosphorylation dependent manner. Via interaction with WDR44 participates in neosynthesized protein export. Participates in the endoplasmic reticulum unfolded protein response (UPR) by inducing ERN1/IRE1 activity. Involved in cellular calcium homeostasis regulation. The chain is Vesicle-associated membrane protein-associated protein B/C from Homo sapiens (Human).